The following is a 224-amino-acid chain: Envelope glycoprotein L (224 aa).

A signal peptide spans 1–19 (MGILGWVGLIAVGVLCVRG). Residues 20–161 (GLPSTEYVIR…FDYSRTRRCV (142 aa)) are interaction with gH. The gL alphaherpesvirus-type domain maps to 23 to 201 (STEYVIRSRV…LTTPPPIIAT (179 aa)). Intrachain disulfides connect Cys44–Cys76 and Cys149–Cys160. Residues 161-224 (VGRQDLGPTN…RRRRPHSRRL (64 aa)) are disordered. Residues 213–224 (KSRRRRPHSRRL) show a composition bias toward basic residues.

It belongs to the herpesviridae glycoprotein L (gL) family. Alphaherpesvirinae gL subfamily. Interacts with glycoprotein H (gH); this interaction is necessary for the correct processing and cell surface expression of gH. The heterodimer gH/gL seems to interact with gB trimers during fusion.

It is found in the virion membrane. It localises to the host cell membrane. The protein resides in the host Golgi apparatus. Its subcellular location is the host trans-Golgi network. Its function is as follows. The heterodimer glycoprotein H-glycoprotein L is required for the fusion of viral and plasma membranes leading to virus entry into the host cell. Acts as a functional inhibitor of gH and maintains gH in an inhibited form. Upon binding to host integrins, gL dissociates from gH leading to activation of the viral fusion glycoproteins gB and gH. This chain is Envelope glycoprotein L, found in Human herpesvirus 1 (strain 17) (HHV-1).